The sequence spans 59 residues: Temporin-CDYe (59 aa).

Positions 1–22 (MFTLKKSMLLLLFLGTISLTLC) are cleaved as a signal peptide. Positions 23-42 (EEERDANEEEENGGEVKVEE) are excised as a propeptide.

This sequence belongs to the frog skin active peptide (FSAP) family. Temporin subfamily. As to expression, expressed by the skin glands.

Its subcellular location is the secreted. Functionally, antimicrobial peptide. This Rana dybowskii (Dybovsky's frog) protein is Temporin-CDYe.